Here is an 846-residue protein sequence, read N- to C-terminus: Arsenate respiratory reductase molybdopterin-containing subunit ArrA (846 aa).

The tat-type signal signal peptide spans 1–29; it reads MRIKRREFLKASAAVGAVAVASPTLNAFA. The 57-residue stretch at 43-99 folds into the 4Fe-4S Mo/W bis-MGD-type domain; the sequence is GKWIPSTCQGCTTWCPVEFLFRMAVRSKYAATQLSKANNGYCCVRGHLMLQQLYDPD. [4Fe-4S] cluster is bound by residues cysteine 50, cysteine 53, cysteine 57, and cysteine 85. Arsenite is bound at residue arginine 155. Tyrosine 156 serves as a coordination point for arsenate. Histidine 179 serves as a coordination point for arsenite. Serine 180 contributes to the arsenate binding site. Cysteine 183 provides a ligand contact to Mo-bis(molybdopterin guanine dinucleotide). Lysine 188 provides a ligand contact to arsenate. Tyrosine 200 is a binding site for arsenite.

This sequence belongs to the prokaryotic molybdopterin-containing oxidoreductase family. In terms of assembly, heterodimer composed of one large subunit (ArrA) and one small subunit (ArrB). The cofactor is [4Fe-4S] cluster. Mo-bis(molybdopterin guanine dinucleotide) is required as a cofactor. Predicted to be exported by the Tat system. The position of the signal peptide cleavage has been experimentally proven.

Its subcellular location is the periplasm. The catalysed reaction is arsenite + A + H2O = arsenate + AH2 + H(+). In terms of biological role, component of the arsenate respiratory reductase (Arr) complex, which catalyzes the reduction of arsenate (As(V)) to arsenite (As(III)). Can use acetate as the electron donor. ArrA is the arsenate-binding subunit. This is Arsenate respiratory reductase molybdopterin-containing subunit ArrA from Chrysiogenes arsenatis.